Reading from the N-terminus, the 426-residue chain is Transcription termination factor Rho (426 aa).

The Rho RNA-BD domain occupies 58 to 131 (QSLARGYLDI…VRVEAVNGLD (74 aa)). ATP contacts are provided by residues 176 to 181 (GRGQRA), 188 to 193 (KAGKTT), and Arg219.

This sequence belongs to the Rho family. In terms of assembly, homohexamer. The homohexamer assembles into an open ring structure.

Its function is as follows. Facilitates transcription termination by a mechanism that involves Rho binding to the nascent RNA, activation of Rho's RNA-dependent ATPase activity, and release of the mRNA from the DNA template. The protein is Transcription termination factor Rho of Deinococcus radiodurans (strain ATCC 13939 / DSM 20539 / JCM 16871 / CCUG 27074 / LMG 4051 / NBRC 15346 / NCIMB 9279 / VKM B-1422 / R1).